Here is a 303-residue protein sequence, read N- to C-terminus: Growth/differentiation factor 15 (303 aa).

The first 30 residues, Met-1–Ser-30, serve as a signal peptide directing secretion. The propeptide occupies Trp-31 to Arg-188. A glycan (N-linked (GlcNAc...) asparagine) is linked at Asn-71. 4 cysteine pairs are disulfide-bonded: Cys-198–Cys-205, Cys-206–Cys-269, Cys-235–Cys-300, and Cys-239–Cys-302.

Belongs to the TGF-beta family. In terms of assembly, homodimer; disulfide-linked. Interacts with GFRAL and RET; ligand of GFRAL, which mediates GDF15 internalization and cellular signaling through interaction with RET via the formation of a 2:2:2 ternary complex composed of GDF15, GFRAL and RET. As to expression, detected in plasma (at protein level). Highly expressed in liver. Expressed in the distal small intestine, colon and kidney. Expressed in skeletal muscle in response to mitochondrial stress. Expressed by cardiomyocytes, expression is highly increased in heart diseases. Also detected in subcutaneous fat.

The protein localises to the secreted. Hormone produced in response to various stresses to confer information about those stresses to the brain, and trigger an aversive response, characterized by nausea and/or loss of appetite. The aversive response is both required to reduce continuing exposure to those stresses at the time of exposure and to promote avoidance behavior in the future. Acts by binding to its receptor, GFRAL, activating GFRAL-expressing neurons localized in the area postrema and nucleus tractus solitarius of the brainstem. It then triggers the activation of neurons localized within the parabrachial nucleus and central amygdala, which constitutes part of the 'emergency circuit' that shapes responses to stressful conditions. The GDF15-GFRAL signal induces expression of genes involved in metabolism, such as lipid metabolism in adipose tissues. Required for avoidance behavior in response to food allergens: induced downstream of mast cell activation to promote aversion and minimize harmful effects of exposure to noxious substances. In addition to suppress appetite, also promotes weight loss by enhancing energy expenditure in muscle: acts by increasing calcium futile cycling in muscle. Contributes to the effect of metformin, an anti-diabetic drug, on appetite reduction and weight loss: produced in the kidney in response to metformin treatment, thereby activating the GDF15-GFRAL response, leading to reduced appetite and weight. Produced in response to anticancer drugs, such as camptothecin or cisplatin, promoting nausea and contributing to malnutrition. Overproduced in many cancers, promoting anorexia in cancer (cachexia). Responsible for the risk of nausea during pregnancy: high levels of GDF15 during pregnancy, mostly originating from embryos, are associated with increased nausea. Maternal sensitivity to nausea is probably determined by pre-pregnancy exposure to GDF15, females with naturally high level of GDF15 being less susceptible to nausea than female mice with low levels of GDF15 before pregnancy. Promotes metabolic adaptation in response to systemic inflammation caused by bacterial and viral infections in order to promote tissue tolerance and prevent tissue damage. Required for tissue tolerance in response to myocardial infarction by acting as an inhibitor of leukocyte integring activation, thereby protecting against cardiac rupture. Inhibits growth hormone signaling on hepatocytes. The protein is Growth/differentiation factor 15 of Mus musculus (Mouse).